The chain runs to 312 residues: Porphobilinogen deaminase (312 aa).

Cys-241 bears the S-(dipyrrolylmethanemethyl)cysteine mark.

It belongs to the HMBS family. Monomer. Dipyrromethane is required as a cofactor.

It carries out the reaction 4 porphobilinogen + H2O = hydroxymethylbilane + 4 NH4(+). It functions in the pathway porphyrin-containing compound metabolism; protoporphyrin-IX biosynthesis; coproporphyrinogen-III from 5-aminolevulinate: step 2/4. In terms of biological role, tetrapolymerization of the monopyrrole PBG into the hydroxymethylbilane pre-uroporphyrinogen in several discrete steps. The protein is Porphobilinogen deaminase of Cytophaga hutchinsonii (strain ATCC 33406 / DSM 1761 / CIP 103989 / NBRC 15051 / NCIMB 9469 / D465).